We begin with the raw amino-acid sequence, 93 residues long: Parbolysin P1 (93 aa).

3 disulfide bridges follow: cysteine 16–cysteine 37, cysteine 22–cysteine 33, and cysteine 47–cysteine 60.

The protein belongs to the worm cytolysin family. In terms of tissue distribution, localized within the skin and proboscis and are most readily isolated from body mucus secretions.

It localises to the secreted. Functionally, cytolysin that shows hemolytic activity (on bovine erythrocytes, HC(50)=5.75 mg/ml). This hemolytic activity is completely inhibited by small unilamelar vesicles composed of PC/PG, PC/PI and PC/PS in 1:1 molar ratios (with at least 100 mg/ml concentration). The recombinant protein does not show hemolytic activity, suggesting that it is not properly folded or that it requires a free N-terminal end for its activity. This Parborlasia corrugatus (Antarctic nemertean worm) protein is Parbolysin P1.